Reading from the N-terminus, the 191-residue chain is 2-amino-4-hydroxy-6-hydroxymethyldihydropteridine pyrophosphokinase (191 aa).

This sequence belongs to the HPPK family.

The enzyme catalyses 6-hydroxymethyl-7,8-dihydropterin + ATP = (7,8-dihydropterin-6-yl)methyl diphosphate + AMP + H(+). The protein operates within cofactor biosynthesis; tetrahydrofolate biosynthesis; 2-amino-4-hydroxy-6-hydroxymethyl-7,8-dihydropteridine diphosphate from 7,8-dihydroneopterin triphosphate: step 4/4. Functionally, catalyzes the transfer of pyrophosphate from adenosine triphosphate (ATP) to 6-hydroxymethyl-7,8-dihydropterin, an enzymatic step in folate biosynthesis pathway. In Mycobacterium leprae (strain TN), this protein is 2-amino-4-hydroxy-6-hydroxymethyldihydropteridine pyrophosphokinase (folK).